A 169-amino-acid polypeptide reads, in one-letter code: uncharacterized protein (169 aa).

Positions 35–163 (LIGRGTFILL…PYCPDSLQAL (129 aa)) constitute a Nudix hydrolase domain. The Nudix box motif lies at 81 to 103 (YADSAARELEEELGIRDAVLREH). Glutamate 88 and glutamate 92 together coordinate Mg(2+).

Belongs to the Nudix hydrolase family. Requires Mg(2+) as cofactor.

This is an uncharacterized protein from Pseudomonas aeruginosa (strain ATCC 15692 / DSM 22644 / CIP 104116 / JCM 14847 / LMG 12228 / 1C / PRS 101 / PAO1).